Consider the following 111-residue polypeptide: uncharacterized protein (111 aa).

Residues 60 to 80 traverse the membrane as a helical segment; it reads TFGRFLAHISCLICILSKRIF.

It localises to the mitochondrion membrane. This is an uncharacterized protein from Arabidopsis thaliana (Mouse-ear cress).